Here is a 278-residue protein sequence, read N- to C-terminus: MLLAHISDTHFRSQNHKLYGFIDVNAGNADVVSQLNGLRERPDAVVVSGDIVNCGRPEEYQVARQVLGALRYPLLLIPGNHDDKACFLEYLRPLCPQLGSDPQNMRYAIDDFATRLLFIDSSLAGHAKGWLTDNTVAWLEAQLSDAGDKPTAVFMHHPPLPLGNAQMDPIACENGHRLLALVERFPSLVRIFCGHNHNLTMTQYRQATIATLPATVHQVPYCHEDTRPYYDMSPPSCLMHRQVGEQWVSYQHSLAHYAGPWLYDEHISCPTDERRSPC.

The Fe cation site is built by aspartate 8, histidine 10, aspartate 50, asparagine 80, histidine 156, histidine 195, and histidine 197.

It belongs to the cyclic nucleotide phosphodiesterase class-III family. The cofactor is Fe(2+).

The enzyme catalyses a sn-glycero-3-phosphodiester + H2O = an alcohol + sn-glycerol 3-phosphate + H(+). It catalyses the reaction sn-glycero-3-phosphoethanolamine + H2O = ethanolamine + sn-glycerol 3-phosphate + H(+). Its function is as follows. Catalyzes the hydrolysis of the 3'-5' phosphodiester bond of glycerophosphodiesters such as glycerophosphorylethanolamine (GPE), a typical phospholipid metabolite. The sequence is that of Glycerophosphodiester phosphodiesterase GpdQ from Enterobacter lignolyticus (strain SCF1).